The chain runs to 83 residues: Small ribosomal subunit protein bS16 (83 aa).

It belongs to the bacterial ribosomal protein bS16 family.

In Pseudomonas putida (strain ATCC 700007 / DSM 6899 / JCM 31910 / BCRC 17059 / LMG 24140 / F1), this protein is Small ribosomal subunit protein bS16.